The sequence spans 577 residues: Beta-fructofuranosidase, insoluble isoenzyme 1 (577 aa).

The first 22 residues, 1 to 22, serve as a signal peptide directing secretion; that stretch reads MGTRLLALAPWLLLLLLQLAGA. D63 is an active-site residue. N-linked (GlcNAc...) asparagine glycans are attached at residues N158, N183, and N333.

This sequence belongs to the glycosyl hydrolase 32 family. As to expression, expressed in roots, leaves and flowers. Weakly expressed in seeds.

The protein localises to the secreted. It is found in the extracellular space. Its subcellular location is the apoplast. It localises to the cell wall. It catalyses the reaction Hydrolysis of terminal non-reducing beta-D-fructofuranoside residues in beta-D-fructofuranosides.. In terms of biological role, may play a role in sucrose partitioning during seed development and in stress response. This Oryza sativa subsp. japonica (Rice) protein is Beta-fructofuranosidase, insoluble isoenzyme 1 (CIN1).